The sequence spans 130 residues: Small ribosomal subunit protein uS9 (130 aa).

Belongs to the universal ribosomal protein uS9 family.

The chain is Small ribosomal subunit protein uS9 from Burkholderia mallei (strain NCTC 10247).